Reading from the N-terminus, the 142-residue chain is MPTPSMEDYIEQIYLLIDEKGYARVSDIAEALSVHPSSVTKMVQKLDKDEYLIYEKYRGLVLTTKGKKIGERLVYRHDLLEQFMRIIGVDEGKIYNDVEGIEHHLSWEAIDRIGDLVEYFEQDAVRVETLRGVQRANEEKSN.

Positions 1–63 (MPTPSMEDYI…YEKYRGLVLT (63 aa)) constitute an HTH dtxR-type domain. Mn(2+)-binding residues include aspartate 8, glutamate 11, histidine 77, glutamate 99, glutamate 102, and histidine 103.

The protein belongs to the DtxR/MntR family. Homodimer.

Its subcellular location is the cytoplasm. With respect to regulation, DNA binding is strongly activated by Mn(2+). Central regulator of manganese homeostasis. This Bacillus cereus (strain G9842) protein is HTH-type transcriptional regulator MntR.